The sequence spans 381 residues: 4-hydroxyphenylpyruvate dioxygenase (381 aa).

VOC domains lie at 22–156 and 184–338; these read GMDA…LVER and AVDH…IFTK. Fe cation is bound by residues H187, H270, and E349.

The protein belongs to the 4HPPD family. In terms of assembly, homodimer. It depends on Fe cation as a cofactor.

It carries out the reaction 3-(4-hydroxyphenyl)pyruvate + O2 = homogentisate + CO2. It functions in the pathway amino-acid degradation; L-phenylalanine degradation; acetoacetate and fumarate from L-phenylalanine: step 3/6. This chain is 4-hydroxyphenylpyruvate dioxygenase (hpd), found in Streptomyces coelicolor (strain ATCC BAA-471 / A3(2) / M145).